Here is a 115-residue protein sequence, read N- to C-terminus: Ribonuclease P protein component (115 aa).

The protein belongs to the RnpA family. Consists of a catalytic RNA component (M1 or rnpB) and a protein subunit.

The enzyme catalyses Endonucleolytic cleavage of RNA, removing 5'-extranucleotides from tRNA precursor.. RNaseP catalyzes the removal of the 5'-leader sequence from pre-tRNA to produce the mature 5'-terminus. It can also cleave other RNA substrates such as 4.5S RNA. The protein component plays an auxiliary but essential role in vivo by binding to the 5'-leader sequence and broadening the substrate specificity of the ribozyme. This is Ribonuclease P protein component from Staphylococcus carnosus (strain TM300).